We begin with the raw amino-acid sequence, 659 residues long: Polyamine transporter 4 (659 aa).

Composition is skewed to polar residues over residues 1–20 and 28–45; these read MPSS…NIQQ and NVTN…TGSI. Positions 1–81 are disordered; that stretch reads MPSSLTKTES…LDWDGPDDPD (81 aa). Topologically, residues 1–99 are cytoplasmic; that stretch reads MPSSLTKTES…KKWYTTMTSA (99 aa). The chain crosses the membrane as a helical span at residues 100-120; the sequence is FLCLVVTMGSSLYVSSVPELV. Topologically, residues 121 to 128 are extracellular; that stretch reads ERYHVSQT. Residues 129–149 traverse the membrane as a helical segment; it reads LALAGLTFYLLGLSTVIGAPL. At 150–157 the chain is on the cytoplasmic side; the sequence is SEVFGRKP. Residues 158–178 traverse the membrane as a helical segment; that stretch reads VYLFSLPVSMLFTMGVGLSNG. Residues 179 to 187 are Extracellular-facing; that stretch reads HMRIILPLR. Residues 188–208 traverse the membrane as a helical segment; the sequence is FLSGVFASPALSVGSGTILDI. The Cytoplasmic segment spans residues 209–215; the sequence is FDVDQVS. The chain crosses the membrane as a helical span at residues 216-236; it reads VAMTYFVLSPFLGPVLSPIMA. The Extracellular segment spans residues 237–246; that stretch reads GFATEAKGWR. Residues 247-267 traverse the membrane as a helical segment; that stretch reads WSEWIQLIAGGLILPFIALMP. Topologically, residues 268–316 are cytoplasmic; it reads ETHKGIILRKRAKKRNIALKKFSREAQKEFLKTTVTITILRPLKMLVVE. Residues 317 to 337 traverse the membrane as a helical segment; that stretch reads PIVFVFSVYVAFIFAILFGFF. The Extracellular portion of the chain corresponds to 338 to 355; the sequence is EAYAVIYRGVYHMSMGIS. A helical transmembrane segment spans residues 356-376; that stretch reads GLPFIGIGVGLWIGAFFYLYI. Residues 377 to 423 lie on the Cytoplasmic side of the membrane; the sequence is DRKYLFPKPPAGTQPLTEKERTSKRTTPYRGARDAETGELLPVVPEK. A disordered region spans residues 387 to 408; that stretch reads AGTQPLTEKERTSKRTTPYRGA. The helical transmembrane segment at 424–444 threads the bilayer; it reads FLIACKFGSVALPIGLFWQAW. The Extracellular segment spans residues 445-456; that stretch reads TARSDVHWMAPV. Residues 457-477 traverse the membrane as a helical segment; that stretch reads AAGVPFGFGLILIFFSVLMYF. The Cytoplasmic portion of the chain corresponds to 478–486; that stretch reads STCYPPLTV. The helical transmembrane segment at 487-509 threads the bilayer; it reads ASCLAANNLLRYVMSSVFPLFTI. At 510–518 the chain is on the extracellular side; it reads QMYTKMKIK. A helical transmembrane segment spans residues 519–539; sequence WASTLFALVCVVMIPIPWVFE. Topologically, residues 540-659 are cytoplasmic; the sequence is KWGSKLRHKS…MATDASARMV (120 aa). The span at 587–602 shows a compositional bias: basic and acidic residues; the sequence is METDPSTREKPGERLS. Residues 587–631 are disordered; it reads METDPSTREKPGERLSLRRTHTQPVPASFDREDGQHAQNRNEPIS. Residues Thr589, Thr606, and Thr608 each carry the phosphothreonine modification. The segment covering 622–631 has biased composition (polar residues); sequence HAQNRNEPIS. Ser633 and Ser646 each carry phosphoserine.

It belongs to the major facilitator superfamily. DHA1 family. Polyamines/proton antiporter (TC 2.A.1.2.16) subfamily.

It localises to the cell membrane. Functionally, cell membrane polyamine/proton antiporter, involved in the detoxification of excess polyamines in the cytoplasm. Recognizes spermidine, spermine and the antimalarial drug quinidine, but not quinine, chloroquine and mefloquine. This is Polyamine transporter 4 (TPO4) from Saccharomyces cerevisiae (strain ATCC 204508 / S288c) (Baker's yeast).